The chain runs to 367 residues: Peptide chain release factor 2 (367 aa).

At Q249 the chain carries N5-methylglutamine.

The protein belongs to the prokaryotic/mitochondrial release factor family. Post-translationally, methylated by PrmC. Methylation increases the termination efficiency of RF2.

The protein localises to the cytoplasm. In terms of biological role, peptide chain release factor 2 directs the termination of translation in response to the peptide chain termination codons UGA and UAA. The chain is Peptide chain release factor 2 from Thermotoga petrophila (strain ATCC BAA-488 / DSM 13995 / JCM 10881 / RKU-1).